We begin with the raw amino-acid sequence, 72 residues long: Large ribosomal subunit protein bL32c (72 aa).

The tract at residues 49 to 72 is disordered; sequence PPAPVSENWDDEAKGFGKDLDAAE. Residues 59 to 72 show a composition bias toward basic and acidic residues; that stretch reads DEAKGFGKDLDAAE.

Belongs to the bacterial ribosomal protein bL32 family.

The protein resides in the plastid. It is found in the chloroplast. In Ostreococcus tauri, this protein is Large ribosomal subunit protein bL32c.